The chain runs to 1385 residues: Serine-aspartate repeat-containing protein D (1385 aa).

Positions 1–35 (MLNRENKTAITRKGMVSNRLNKFSIRKYTVGTASI) are cleaved as a signal peptide. The short motif at 23-34 (FSIRKYTVGTAS) is the YSIRK-G/S signaling motif element. Positions 36 to 568 (LVGTTLIFGL…NNQSGGAGQE (533 aa)) are ligand binding A region. Disordered regions lie at residues 54–162 (ESTN…DLLE) and 200–224 (ETLV…KSTA). 2 stretches are compositionally biased toward polar residues: residues 62–71 (EATTSASDNQ) and 94–109 (EMVS…NGNK). Residues 130-145 (KSDEQASPKSTNEDLN) are compositionally biased toward basic and acidic residues. Residues 146-155 (TKQTISNQEG) are compositionally biased toward polar residues. Low complexity predominate over residues 205 to 214 (NNSNSNNENN). 5 CNA-B domains span residues 569–680 (VYKI…IYKP), 681–791 (KYNL…YKTP), 792–901 (KYNL…FYKP), 902–1012 (TYNL…YKTP), and 1013–1123 (KYSL…EEET). 3 disordered regions span residues 856–886 (FETP…TGVI), 972–992 (YTPT…GLTT), and 1077–1361 (FEKP…SNNA). Polar residues-rich tracts occupy residues 860 to 869 (SGYTPTQVGS) and 972 to 981 (YTPTSVTSGN). The segment covering 1081–1090 (TGLTQTGTNT) has biased composition (low complexity). Composition is skewed to acidic residues over residues 1091–1101 (TEDDKDADGGE) and 1118–1324 (YYEE…DSDS). Positions 1348–1352 (LPETG) match the LPXTG sorting signal motif. Threonine 1351 bears the Pentaglycyl murein peptidoglycan amidated threonine mark. A propeptide spans 1352 to 1385 (GNENSGSNNATLFGGLFAALGSLLLFGRRKKQNK) (removed by sortase).

This sequence belongs to the serine-aspartate repeat-containing protein (SDr) family. As to quaternary structure, interacts with host DSG1; this interaction increases S.aureus adherence to keratinocytes.

The protein resides in the secreted. It is found in the cell wall. Cell surface-associated calcium-binding protein which plays an important role in adhesion and pathogenesis. Mediates interactions with components of the extracellular matrix such as host DSG1 to promote bacterial adhesion to host cells. Contributes to the resistance to killing by innate immune components such as neutrophils present in blood and thus attenuates bacterial clearance. This is Serine-aspartate repeat-containing protein D (sdrD) from Staphylococcus aureus (strain Mu50 / ATCC 700699).